A 677-amino-acid polypeptide reads, in one-letter code: DNA ligase (677 aa).

NAD(+)-binding positions include aspartate 32–aspartate 36, serine 81–leucine 82, and glutamate 112. Lysine 114 serves as the catalytic N6-AMP-lysine intermediate. Positions 135, 171, 288, and 312 each coordinate NAD(+). Zn(2+)-binding residues include cysteine 416, cysteine 419, cysteine 434, and cysteine 439. The BRCT domain occupies tyrosine 598–serine 677.

This sequence belongs to the NAD-dependent DNA ligase family. LigA subfamily. Mg(2+) is required as a cofactor. The cofactor is Mn(2+).

It carries out the reaction NAD(+) + (deoxyribonucleotide)n-3'-hydroxyl + 5'-phospho-(deoxyribonucleotide)m = (deoxyribonucleotide)n+m + AMP + beta-nicotinamide D-nucleotide.. In terms of biological role, DNA ligase that catalyzes the formation of phosphodiester linkages between 5'-phosphoryl and 3'-hydroxyl groups in double-stranded DNA using NAD as a coenzyme and as the energy source for the reaction. It is essential for DNA replication and repair of damaged DNA. In Dehalococcoides mccartyi (strain ATCC BAA-2266 / KCTC 15142 / 195) (Dehalococcoides ethenogenes (strain 195)), this protein is DNA ligase.